The primary structure comprises 481 residues: Pentatricopeptide repeat-containing protein At2g48000 (481 aa).

PPR repeat units follow at residues Thr147 to Pro181, Ser187 to Pro221, Asp222 to Pro256, Thr257 to His287, Glu292 to Lys324, Lys328 to Ile362, Thr364 to Met398, Ser399 to Arg433, and Ser434 to Phe469.

Belongs to the PPR family. P subfamily.

This Arabidopsis thaliana (Mouse-ear cress) protein is Pentatricopeptide repeat-containing protein At2g48000.